A 441-amino-acid polypeptide reads, in one-letter code: 3-phosphoshikimate 1-carboxyvinyltransferase (441 aa).

Residues K25, S26, and R30 each coordinate 3-phosphoshikimate. K25 provides a ligand contact to phosphoenolpyruvate. 2 residues coordinate phosphoenolpyruvate: G97 and R125. The 3-phosphoshikimate site is built by S169, Q170, D311, and K338. Q170 provides a ligand contact to phosphoenolpyruvate. The Proton acceptor role is filled by D311. Residues R342, R383, and K410 each contribute to the phosphoenolpyruvate site.

The protein belongs to the EPSP synthase family. As to quaternary structure, monomer.

Its subcellular location is the cytoplasm. It catalyses the reaction 3-phosphoshikimate + phosphoenolpyruvate = 5-O-(1-carboxyvinyl)-3-phosphoshikimate + phosphate. The protein operates within metabolic intermediate biosynthesis; chorismate biosynthesis; chorismate from D-erythrose 4-phosphate and phosphoenolpyruvate: step 6/7. In terms of biological role, catalyzes the transfer of the enolpyruvyl moiety of phosphoenolpyruvate (PEP) to the 5-hydroxyl of shikimate-3-phosphate (S3P) to produce enolpyruvyl shikimate-3-phosphate and inorganic phosphate. The polypeptide is 3-phosphoshikimate 1-carboxyvinyltransferase (Chlamydia muridarum (strain MoPn / Nigg)).